The primary structure comprises 628 residues: Chaperone protein HtpG (628 aa).

Residues 1 to 334 (MTTTDTASET…SEDLPLNLSR (334 aa)) are a; substrate-binding. A b region spans residues 335 to 550 (EMLQNNPQLA…GFGPDRELEK (216 aa)). A c region spans residues 551 to 628 (MLARANKGAA…LVLRGLVAHG (78 aa)).

It belongs to the heat shock protein 90 family. In terms of assembly, homodimer.

The protein resides in the cytoplasm. In terms of biological role, molecular chaperone. Has ATPase activity. This chain is Chaperone protein HtpG, found in Rhodopseudomonas palustris (strain BisB5).